The chain runs to 237 residues: 1-(5-phosphoribosyl)-5-[(5-phosphoribosylamino)methylideneamino] imidazole-4-carboxamide isomerase (237 aa).

The Proton acceptor role is filled by D8. The active-site Proton donor is D129.

This sequence belongs to the HisA/HisF family.

The protein resides in the cytoplasm. The catalysed reaction is 1-(5-phospho-beta-D-ribosyl)-5-[(5-phospho-beta-D-ribosylamino)methylideneamino]imidazole-4-carboxamide = 5-[(5-phospho-1-deoxy-D-ribulos-1-ylimino)methylamino]-1-(5-phospho-beta-D-ribosyl)imidazole-4-carboxamide. It functions in the pathway amino-acid biosynthesis; L-histidine biosynthesis; L-histidine from 5-phospho-alpha-D-ribose 1-diphosphate: step 4/9. The polypeptide is 1-(5-phosphoribosyl)-5-[(5-phosphoribosylamino)methylideneamino] imidazole-4-carboxamide isomerase (Alkaliphilus metalliredigens (strain QYMF)).